Reading from the N-terminus, the 426-residue chain is Anaerobic glycerol-3-phosphate dehydrogenase subunit B (426 aa).

This sequence belongs to the anaerobic G-3-P dehydrogenase subunit B family. In terms of assembly, composed of a catalytic GlpA/B dimer and of membrane bound GlpC. The cofactor is FMN.

The enzyme catalyses a quinone + sn-glycerol 3-phosphate = dihydroxyacetone phosphate + a quinol. Its pathway is polyol metabolism; glycerol degradation via glycerol kinase pathway; glycerone phosphate from sn-glycerol 3-phosphate (anaerobic route): step 1/1. Functionally, conversion of glycerol 3-phosphate to dihydroxyacetone. Uses fumarate or nitrate as electron acceptor. This chain is Anaerobic glycerol-3-phosphate dehydrogenase subunit B, found in Haemophilus ducreyi (strain 35000HP / ATCC 700724).